A 299-amino-acid chain; its full sequence is tRNA dimethylallyltransferase (299 aa).

22–29 contributes to the ATP binding site; the sequence is GPTASGKT. Residue 24–29 participates in substrate binding; it reads TASGKT. Interaction with substrate tRNA regions lie at residues 47 to 50 and 172 to 176; these read DSRQ and QRLLR.

Belongs to the IPP transferase family. As to quaternary structure, monomer. Requires Mg(2+) as cofactor.

It catalyses the reaction adenosine(37) in tRNA + dimethylallyl diphosphate = N(6)-dimethylallyladenosine(37) in tRNA + diphosphate. In terms of biological role, catalyzes the transfer of a dimethylallyl group onto the adenine at position 37 in tRNAs that read codons beginning with uridine, leading to the formation of N6-(dimethylallyl)adenosine (i(6)A). This Endomicrobium trichonymphae protein is tRNA dimethylallyltransferase.